The following is a 108-amino-acid chain: UPF0060 membrane protein Nham_2004 (108 aa).

4 helical membrane-spanning segments follow: residues 5-25, 31-51, 61-81, and 88-108; these read AAYVGAAVAEIAGCFAFWAWL, VWWLAPGMVSLALFAYLLTLV, AAYGGVYIIASLGWLWSVEGL, and LTGAAICLLGAAIILFGPRQI.

The protein belongs to the UPF0060 family.

The protein localises to the cell inner membrane. The sequence is that of UPF0060 membrane protein Nham_2004 from Nitrobacter hamburgensis (strain DSM 10229 / NCIMB 13809 / X14).